A 329-amino-acid polypeptide reads, in one-letter code: 36 kDa antigen (329 aa).

Residues 11–31 (AILTGGGALLLGLIVLFYLAY) traverse the membrane as a helical segment.

Belongs to the membrane fusion protein (MFP) (TC 8.A.1) family.

It localises to the membrane. The sequence is that of 36 kDa antigen from Helicobacter pylori (strain J99 / ATCC 700824) (Campylobacter pylori J99).